The chain runs to 173 residues: Nucleoside-triphosphatase THEP1 (173 aa).

ATP is bound by residues 15–22 and 101–108; these read GMPGVGKT and LKIIDEIG.

This sequence belongs to the THEP1 NTPase family.

It carries out the reaction a ribonucleoside 5'-triphosphate + H2O = a ribonucleoside 5'-diphosphate + phosphate + H(+). Its function is as follows. Has nucleotide phosphatase activity towards ATP, GTP, CTP, TTP and UTP. May hydrolyze nucleoside diphosphates with lower efficiency. This is Nucleoside-triphosphatase THEP1 from Pyrobaculum aerophilum (strain ATCC 51768 / DSM 7523 / JCM 9630 / CIP 104966 / NBRC 100827 / IM2).